A 122-amino-acid polypeptide reads, in one-letter code: Small ribosomal subunit protein uS13 (122 aa).

The segment at 95–122 (GLPVRGQKTKTNARTRKGPKRTVANKKK) is disordered.

Belongs to the universal ribosomal protein uS13 family. In terms of assembly, part of the 30S ribosomal subunit. Forms a loose heterodimer with protein S19. Forms two bridges to the 50S subunit in the 70S ribosome.

In terms of biological role, located at the top of the head of the 30S subunit, it contacts several helices of the 16S rRNA. In the 70S ribosome it contacts the 23S rRNA (bridge B1a) and protein L5 of the 50S subunit (bridge B1b), connecting the 2 subunits; these bridges are implicated in subunit movement. Contacts the tRNAs in the A and P-sites. The sequence is that of Small ribosomal subunit protein uS13 from Lachnoclostridium phytofermentans (strain ATCC 700394 / DSM 18823 / ISDg) (Clostridium phytofermentans).